The primary structure comprises 97 residues: YcgL domain-containing protein PA1295 (97 aa).

In terms of domain architecture, YcgL spans 3-87 (RICSVYKSPR…GEEEYIEHLP (85 aa)).

The chain is YcgL domain-containing protein PA1295 from Pseudomonas aeruginosa (strain ATCC 15692 / DSM 22644 / CIP 104116 / JCM 14847 / LMG 12228 / 1C / PRS 101 / PAO1).